We begin with the raw amino-acid sequence, 274 residues long: NH(3)-dependent NAD(+) synthetase (274 aa).

Residue 46 to 53 (GISGGQDS) participates in ATP binding. Asp-52 contributes to the Mg(2+) binding site. Arg-140 lines the deamido-NAD(+) pocket. Residue Thr-160 participates in ATP binding. Glu-165 contributes to the Mg(2+) binding site. The deamido-NAD(+) site is built by Lys-173 and Asp-180. ATP-binding residues include Lys-189 and Thr-211. 260-261 (HK) serves as a coordination point for deamido-NAD(+).

It belongs to the NAD synthetase family. In terms of assembly, homodimer.

The enzyme catalyses deamido-NAD(+) + NH4(+) + ATP = AMP + diphosphate + NAD(+) + H(+). The protein operates within cofactor biosynthesis; NAD(+) biosynthesis; NAD(+) from deamido-NAD(+) (ammonia route): step 1/1. Catalyzes the ATP-dependent amidation of deamido-NAD to form NAD. Uses ammonia as a nitrogen source. The polypeptide is NH(3)-dependent NAD(+) synthetase (Streptococcus pneumoniae serotype 19F (strain G54)).